Reading from the N-terminus, the 811-residue chain is Bifunctional enzyme MurC/Ddl (811 aa).

Residues 1–450 form a UDP-N-acetylmuramate--alanine ligase region; it reads MNRKNHYHFI…GNALKDFEPK (450 aa). ATP contacts are provided by residues 111 to 117 and 607 to 662; these read GSHGKTT and LETF…SREI. A D-alanine--D-alanine ligase region spans residues 451–811; sequence KLSVGVVCGG…NKQCLLTAKS (361 aa). Positions 574–785 constitute an ATP-grasp domain; that stretch reads KRLAASVGVP…FEQIVHQLII (212 aa). Mg(2+) is bound by residues Asp-739, Glu-752, and Asn-754.

The protein in the N-terminal section; belongs to the MurCDEF family. It in the C-terminal section; belongs to the D-alanine--D-alanine ligase family. Mg(2+) is required as a cofactor. It depends on Mn(2+) as a cofactor.

It is found in the cytoplasm. It carries out the reaction UDP-N-acetyl-alpha-D-muramate + L-alanine + ATP = UDP-N-acetyl-alpha-D-muramoyl-L-alanine + ADP + phosphate + H(+). It catalyses the reaction 2 D-alanine + ATP = D-alanyl-D-alanine + ADP + phosphate + H(+). Its pathway is cell wall biogenesis; peptidoglycan biosynthesis. The chain is Bifunctional enzyme MurC/Ddl (murC/ddlA) from Chlamydia caviae (strain ATCC VR-813 / DSM 19441 / 03DC25 / GPIC) (Chlamydophila caviae).